Here is a 38-residue protein sequence, read N- to C-terminus: Putative defensin-like protein 105 (38 aa).

3 cysteine pairs are disulfide-bonded: Cys5-Cys27, Cys13-Cys33, and Cys17-Cys34.

It belongs to the DEFL family.

This Arabidopsis thaliana (Mouse-ear cress) protein is Putative defensin-like protein 105.